Here is a 386-residue protein sequence, read N- to C-terminus: Cytochrome b (386 aa).

4 helical membrane-spanning segments follow: residues 32-52, 76-98, 113-133, and 179-199; these read TGSLTGLCLVIQIASGIFTAM, YLIRYIHANGASFFFVCMYGHIG, VWVIGVIIFITTMATAFTGYC, and FFALHYLCPFILAALVVMHLM. The heme b site is built by histidine 82 and histidine 96. Positions 183 and 197 each coordinate heme b. Residue histidine 202 coordinates a ubiquinone. 4 consecutive transmembrane segments (helical) span residues 225–245, 289–309, 321–341, and 348–368; these read FVFKDLVTVFVFLLIFSTFVF, LGGVIAMFGSILITLVLPVTD, FSKTLYFTFTYNFILLGQLGQ, and FIEMGQIATFNYFTYFIVLVP.

The protein belongs to the cytochrome b family. Fungal cytochrome b-c1 complex contains 10 subunits; 3 respiratory subunits, 2 core proteins and 5 low-molecular weight proteins. Cytochrome b-c1 complex is a homodimer. Requires heme b as cofactor.

The protein resides in the mitochondrion inner membrane. Functionally, component of the ubiquinol-cytochrome c reductase complex (complex III or cytochrome b-c1 complex) that is part of the mitochondrial respiratory chain. The b-c1 complex mediates electron transfer from ubiquinol to cytochrome c. Contributes to the generation of a proton gradient across the mitochondrial membrane that is then used for ATP synthesis. The polypeptide is Cytochrome b (COB) (Wickerhamomyces pijperi (Yeast)).